The primary structure comprises 304 residues: Polyisoprenyl-teichoic acid--peptidoglycan teichoic acid transferase TagU (304 aa).

The Cytoplasmic segment spans residues 1–4 (MKKK). The helical; Signal-anchor for type II membrane protein transmembrane segment at 5 to 25 (ILFWILGIIGIMIIGGGVYAY) threads the bilayer. Residues 26 to 304 (NVYSSVSKTL…KLRAHLELTK (279 aa)) are Extracellular-facing.

It belongs to the LytR/CpsA/Psr (LCP) family.

It localises to the cell membrane. Its pathway is cell wall biogenesis. Its function is as follows. May catalyze the final step in cell wall teichoic acid biosynthesis, the transfer of the anionic cell wall polymers (APs) from their lipid-linked precursor to the cell wall peptidoglycan (PG). The sequence is that of Polyisoprenyl-teichoic acid--peptidoglycan teichoic acid transferase TagU from Bacillus mycoides (strain KBAB4) (Bacillus weihenstephanensis).